A 66-amino-acid polypeptide reads, in one-letter code: Cold shock protein CspB (66 aa).

The 60-residue stretch at 4-63 (GKVKWFNNEKGYGFIEVEGGSDVFVHFTAIQGEGFKTLEEGQEVSFEIVQGNRGPQAANV) folds into the CSD domain.

In terms of assembly, homodimer.

It is found in the cytoplasm. Its function is as follows. Affects cell viability at low temperatures. This is Cold shock protein CspB (cspB) from Bacillus caldolyticus.